Here is a 267-residue protein sequence, read N- to C-terminus: 4-hydroxy-tetrahydrodipicolinate reductase (267 aa).

11 to 16 (GAAGRM) serves as a coordination point for NAD(+). R39 serves as a coordination point for NADP(+). Residues 100–102 (GTT) and 126–129 (APNF) each bind NAD(+). Residue H156 is the Proton donor/acceptor of the active site. Residue H157 participates in (S)-2,3,4,5-tetrahydrodipicolinate binding. K160 functions as the Proton donor in the catalytic mechanism. 166–167 (GT) provides a ligand contact to (S)-2,3,4,5-tetrahydrodipicolinate.

Belongs to the DapB family.

It localises to the cytoplasm. The catalysed reaction is (S)-2,3,4,5-tetrahydrodipicolinate + NAD(+) + H2O = (2S,4S)-4-hydroxy-2,3,4,5-tetrahydrodipicolinate + NADH + H(+). It carries out the reaction (S)-2,3,4,5-tetrahydrodipicolinate + NADP(+) + H2O = (2S,4S)-4-hydroxy-2,3,4,5-tetrahydrodipicolinate + NADPH + H(+). The protein operates within amino-acid biosynthesis; L-lysine biosynthesis via DAP pathway; (S)-tetrahydrodipicolinate from L-aspartate: step 4/4. In terms of biological role, catalyzes the conversion of 4-hydroxy-tetrahydrodipicolinate (HTPA) to tetrahydrodipicolinate. In Moorella thermoacetica (strain ATCC 39073 / JCM 9320), this protein is 4-hydroxy-tetrahydrodipicolinate reductase.